We begin with the raw amino-acid sequence, 264 residues long: MVWLPRVPCVAAVILLLTVLSPPVALVRDTRPRFLEYVTSECHFYNGTQHVRFLERFIYNREENLRFDSDVGEYRAVTELGRPDAENWNSQPEILEDARASVDTYCRHNYEISDKFLVRRRVEPTVTVYPTKTQPLEHHNLLVCSVSDFYPGNIEVRWFRNGKEEETGIVSTGLVRNGDWTFQTLVMLETVPQSGEVYTCQVEHPSLTDPVTVEWKAQSTSAQNKMLSGVGGFVLGLLFLGAGLFIYFRNQKGQSGLQPTGLLS.

A signal peptide spans 1–31 (MVWLPRVPCVAAVILLLTVLSPPVALVRDTR). The segment at 32-121 (PRFLEYVTSE…ISDKFLVRRR (90 aa)) is beta-1. Topologically, residues 32–225 (PRFLEYVTSE…KAQSTSAQNK (194 aa)) are extracellular. 2 disulfide bridges follow: Cys-42–Cys-106 and Cys-144–Cys-200. Asn-46 carries an N-linked (GlcNAc...) asparagine glycan. The interval 122–215 (VEPTVTVYPT…SLTDPVTVEW (94 aa)) is beta-2. An Ig-like C1-type domain is found at 124-214 (PTVTVYPTKT…PSLTDPVTVE (91 aa)). Residues 216-225 (KAQSTSAQNK) are connecting peptide. The helical transmembrane segment at 226–248 (MLSGVGGFVLGLLFLGAGLFIYF) threads the bilayer. Residues 249–264 (RNQKGQSGLQPTGLLS) are Cytoplasmic-facing.

Belongs to the MHC class II family.

The protein resides in the membrane. This is H-2 class II histocompatibility antigen, E-D beta chain from Mus musculus (Mouse).